The primary structure comprises 440 residues: Phosphatidylcholine-sterol acyltransferase (440 aa).

An N-terminal signal peptide occupies residues 1–24 (MGPPGSPWQWVPLLLGLLLPPAAP). Asparagine 44 is a glycosylation site (N-linked (GlcNAc...) asparagine). Residues cysteine 74 and cysteine 98 are joined by a disulfide bond. Asparagine 108 carries N-linked (GlcNAc...) asparagine glycosylation. Serine 205 (nucleophile) is an active-site residue. An N-linked (GlcNAc...) asparagine glycan is attached at asparagine 296. Cysteine 337 and cysteine 380 are joined by a disulfide. Active-site charge relay system residues include aspartate 369 and histidine 401. Asparagine 408 carries an N-linked (GlcNAc...) asparagine glycan.

Belongs to the AB hydrolase superfamily. Lipase family. As to expression, most abundant in liver and cerebellum.

Its subcellular location is the secreted. The enzyme catalyses a sterol + a 1,2-diacyl-sn-glycero-3-phosphocholine = a sterol ester + a 1-acyl-sn-glycero-3-phosphocholine. With respect to regulation, APOA1 is the most potent activator in plasma. Also activated by APOE, APOC1 and APOA4. Its function is as follows. Central enzyme in the extracellular metabolism of plasma lipoproteins. Synthesized mainly in the liver and secreted into plasma where it converts cholesterol and phosphatidylcholines (lecithins) to cholesteryl esters and lysophosphatidylcholines on the surface of high and low density lipoproteins (HDLs and LDLs). The cholesterol ester is then transported back to the liver. Has a preference for plasma 16:0-18:2 or 18:O-18:2 phosphatidylcholines. Also produced in the brain by primary astrocytes, and esterifies free cholesterol on nascent APOE-containing lipoproteins secreted from glia and influences cerebral spinal fluid (CSF) APOE- and APOA1 levels. Together with APOE and the cholesterol transporter ABCA1, plays a key role in the maturation of glial-derived, nascent lipoproteins. Required for remodeling high-density lipoprotein particles into their spherical forms. The chain is Phosphatidylcholine-sterol acyltransferase (LCAT) from Papio anubis (Olive baboon).